Reading from the N-terminus, the 277-residue chain is Proteasome subunit beta type-7 (277 aa).

Residues 1-43 (MAAVSVYAPPVGGFSFDNCRRNAVLEADFAKRGYKLPKVRKTG) constitute a propeptide, removed in mature form. Residue threonine 44 is the Nucleophile of the active site.

It belongs to the peptidase T1B family. As to quaternary structure, the 26S proteasome consists of a 20S proteasome core and two 19S regulatory subunits. The 20S proteasome core is a barrel-shaped complex made of 28 subunits that are arranged in four stacked rings. The two outer rings are each formed by seven alpha subunits, and the two inner rings are formed by seven beta subunits. The proteolytic activity is exerted by three beta-subunits PSMB5, PSMB6 and PSMB7. In terms of assembly, (Microbial infection) Interacts with HIV-1 Tat protein. In terms of tissue distribution, expressed at a low level in colonic mucosa. Up-regulated in colorectal cancer tissues.

It is found in the cytoplasm. Its subcellular location is the nucleus. It catalyses the reaction Cleavage of peptide bonds with very broad specificity.. In terms of biological role, component of the 20S core proteasome complex involved in the proteolytic degradation of most intracellular proteins. This complex plays numerous essential roles within the cell by associating with different regulatory particles. Associated with two 19S regulatory particles, forms the 26S proteasome and thus participates in the ATP-dependent degradation of ubiquitinated proteins. The 26S proteasome plays a key role in the maintenance of protein homeostasis by removing misfolded or damaged proteins that could impair cellular functions, and by removing proteins whose functions are no longer required. Associated with the PA200 or PA28, the 20S proteasome mediates ubiquitin-independent protein degradation. This type of proteolysis is required in several pathways including spermatogenesis (20S-PA200 complex) or generation of a subset of MHC class I-presented antigenic peptides (20S-PA28 complex). Within the 20S core complex, PSMB7 displays a trypsin-like activity. The sequence is that of Proteasome subunit beta type-7 from Homo sapiens (Human).